Here is a 266-residue protein sequence, read N- to C-terminus: MVKAKKQYGQNFLIDKSVLAKIIQAIPKEMNNIIEIGPGLGDLTQELLKISQVKAYEIDNDLIPILKKKFQKELECGKFNLIHQDASEAFNPSLDEKPYFLVANLPYYVASHIILKALEDKNCLGLIVMAQREMAEKFCAKEGNSEFSSLGVLSAMICERKILFDVDPQCFNPPPKVMSAVMSLIKTKDFDELCEIENFKNFLKDCFKAPRKQLLGNLKTYKAKVLEVLSTLGLKENIRPHEICVDLYLKIYDKLKDEYGRKQRDK.

Residues N11, L13, G37, E57, D85, and N104 each coordinate S-adenosyl-L-methionine.

Belongs to the class I-like SAM-binding methyltransferase superfamily. rRNA adenine N(6)-methyltransferase family. RsmA subfamily.

It localises to the cytoplasm. It carries out the reaction adenosine(1518)/adenosine(1519) in 16S rRNA + 4 S-adenosyl-L-methionine = N(6)-dimethyladenosine(1518)/N(6)-dimethyladenosine(1519) in 16S rRNA + 4 S-adenosyl-L-homocysteine + 4 H(+). In terms of biological role, specifically dimethylates two adjacent adenosines (A1518 and A1519) in the loop of a conserved hairpin near the 3'-end of 16S rRNA in the 30S particle. May play a critical role in biogenesis of 30S subunits. The sequence is that of Ribosomal RNA small subunit methyltransferase A from Campylobacter jejuni subsp. jejuni serotype O:2 (strain ATCC 700819 / NCTC 11168).